The primary structure comprises 281 residues: MNIVNTIKDVRLIIKKWKDENLSIGYVPTMGYLHEGHTSLIKKAREENDKVIVSIFVNPIQFGPKEDYSTYPRDLVKDSSLCEKFGVDLIFNPETSEMYPNKIYSHINVDILTENLCGEKRPGHFQGVCTVLTKFFNILNPTKAYLGEKDAQQLAVVKKMVEDLNFPIEIIGCPIIREEDGLAKSSRNAYLNKQERKSALILNKSLKEALKALESGEKNLNNIKDIIVSKLNKEPLAKIDYVSIVDSITLQSVEKIQSSILVAIAVYIGKTRLIDNFTFKL.

ATP is bound at residue 30 to 37 (MGYLHEGH). The active-site Proton donor is H37. Q61 is a binding site for (R)-pantoate. Q61 contributes to the beta-alanine binding site. 147–150 (GEKD) contributes to the ATP binding site. Q153 is a (R)-pantoate binding site. ATP contacts are provided by residues I176 and 184-187 (KSSR).

It belongs to the pantothenate synthetase family. In terms of assembly, homodimer.

The protein localises to the cytoplasm. It catalyses the reaction (R)-pantoate + beta-alanine + ATP = (R)-pantothenate + AMP + diphosphate + H(+). It participates in cofactor biosynthesis; (R)-pantothenate biosynthesis; (R)-pantothenate from (R)-pantoate and beta-alanine: step 1/1. Its function is as follows. Catalyzes the condensation of pantoate with beta-alanine in an ATP-dependent reaction via a pantoyl-adenylate intermediate. In Clostridium botulinum (strain ATCC 19397 / Type A), this protein is Pantothenate synthetase.